The primary structure comprises 894 residues: B-cell lymphoma/leukemia 11B (894 aa).

Phosphoserine is present on residues serine 97 and serine 110. Residue threonine 120 is modified to Phosphothreonine. Position 129 is a phosphoserine (serine 129). A Glycyl lysine isopeptide (Lys-Gly) (interchain with G-Cter in SUMO2) cross-link involves residue lysine 137. The segment at 221–251 adopts a C2H2-type 1 zinc-finger fold; that stretch reads YICTTCKQPFNSAWFLLQHAQNTHGFRIYLE. Serine 256 carries the post-translational modification Phosphoserine. Residue threonine 260 is modified to Phosphothreonine. At serine 277 the chain carries Phosphoserine. Arginine 293 is subject to Omega-N-methylarginine. At arginine 322 the chain carries Asymmetric dimethylarginine. Serine 358 carries the phosphoserine modification. Disordered stretches follow at residues 370 to 428 and 471 to 583; these read LAGN…KSKS and KRHM…GGGA. Threonine 376 carries the post-translational modification Phosphothreonine. Serine 381, serine 398, and serine 401 each carry phosphoserine. A compositionally biased stretch (pro residues) spans 396–423; sequence QPSPKSPFLSTPPLPPMPPGGTPPPQPP. Phosphothreonine occurs at positions 406 and 417. C2H2-type zinc fingers lie at residues 427 to 454 and 455 to 482; these read KSCEFCGKTFKFQSNLIVHRRSHTGEKP and YKCQLCDHACSQASKLKRHMKTHMHKAG. Positions 471 to 480 are enriched in basic residues; sequence KRHMKTHMHK. Serine 483, serine 488, serine 496, and serine 497 each carry phosphoserine. Basic and acidic residues predominate over residues 511 to 529; sequence KAADGDFRHHESDPSLGHE. Residues 530–546 show a composition bias toward acidic residues; the sequence is PEEEDEEEEEEEEELLL. Positions 568 to 583 are enriched in gly residues; it reads NGGGGVPGVPGAGGGA. Residues lysine 591 and lysine 617 each participate in a glycyl lysine isopeptide (Lys-Gly) (interchain with G-Cter in SUMO2) cross-link. Positions 653-680 are disordered; it reads GRGGGFAPGTEPFPGLFPRKPAPLPSPG. Position 678 is a phosphoserine (serine 678). Glycyl lysine isopeptide (Lys-Gly) (interchain with G-Cter in SUMO2) cross-links involve residues lysine 686 and lysine 723. The segment covering 737–752 has biased composition (polar residues); the sequence is FATSSEHSSENGSLRF. The disordered stretch occupies residues 737-794; sequence FATSSEHSSENGSLRFSTPPGDLLDGGLSGRSGTASGGSTPHLGGPGPGRPSSKEGRR. The segment covering 753–775 has biased composition (low complexity); it reads STPPGDLLDGGLSGRSGTASGGS. At threonine 754 the chain carries Phosphothreonine. Serine 765 and serine 772 each carry phosphoserine. 3 C2H2-type zinc fingers span residues 796 to 823, 824 to 853, and 854 to 884; these read DTCEYCGKVFKNCSNLTVHRRSHTGERP, YKCELCNYACAQSSKLTRHMKTHGQIGKEV, and YRCDICQMPFSVYSTLEKHMKKWHGEHLLTN. Lysine 851 carries the post-translational modification N6-acetyllysine. Lysine 887 is covalently cross-linked (Glycyl lysine isopeptide (Lys-Gly) (interchain with G-Cter in SUMO2)).

In terms of assembly, interacts with TFCOUP1, SIRT1, ARP1 and EAR2. Interacts with EP300; the interaction is detected in activated T-lymphocytes, but not under resting conditions. Sumoylated with SUMO1. As to expression, highly expressed in brain and in malignant T-cell lines derived from patients with adult T-cell leukemia/lymphoma.

It localises to the nucleus. Functionally, key regulator of both differentiation and survival of T-lymphocytes during thymocyte development in mammals. Essential in controlling the responsiveness of hematopoietic stem cells to chemotactic signals by modulating the expression of the receptors CCR7 and CCR9, which direct the movement of progenitor cells from the bone marrow to the thymus. Is a regulator of IL2 promoter and enhances IL2 expression in activated CD4(+) T-lymphocytes. Tumor-suppressor that represses transcription through direct, TFCOUP2-independent binding to a GC-rich response element. May also function in the P53-signaling pathway. The polypeptide is B-cell lymphoma/leukemia 11B (BCL11B) (Homo sapiens (Human)).